We begin with the raw amino-acid sequence, 334 residues long: DNA-directed RNA polymerase subunit alpha (334 aa).

Positions 1–232 (MIREKLKVST…DLFIPFLHAE (232 aa)) are alpha N-terminal domain (alpha-NTD). The tract at residues 267–334 (QKEITLKSIF…NILQIENHFV (68 aa)) is alpha C-terminal domain (alpha-CTD).

Belongs to the RNA polymerase alpha chain family. In terms of assembly, in plastids the minimal PEP RNA polymerase catalytic core is composed of four subunits: alpha, beta, beta', and beta''. When a (nuclear-encoded) sigma factor is associated with the core the holoenzyme is formed, which can initiate transcription.

Its subcellular location is the plastid. The protein localises to the chloroplast. It carries out the reaction RNA(n) + a ribonucleoside 5'-triphosphate = RNA(n+1) + diphosphate. In terms of biological role, DNA-dependent RNA polymerase catalyzes the transcription of DNA into RNA using the four ribonucleoside triphosphates as substrates. This Pisum sativum (Garden pea) protein is DNA-directed RNA polymerase subunit alpha.